Reading from the N-terminus, the 156-residue chain is 6,7-dimethyl-8-ribityllumazine synthase (156 aa).

Residues phenylalanine 22, 57–59 (AYE), and 81–83 (TVI) each bind 5-amino-6-(D-ribitylamino)uracil. 86–87 (GT) provides a ligand contact to (2S)-2-hydroxy-3-oxobutyl phosphate. The Proton donor role is filled by histidine 89. Phenylalanine 114 provides a ligand contact to 5-amino-6-(D-ribitylamino)uracil. Arginine 128 is a binding site for (2S)-2-hydroxy-3-oxobutyl phosphate.

This sequence belongs to the DMRL synthase family. In terms of assembly, forms an icosahedral capsid composed of 60 subunits, arranged as a dodecamer of pentamers.

The catalysed reaction is (2S)-2-hydroxy-3-oxobutyl phosphate + 5-amino-6-(D-ribitylamino)uracil = 6,7-dimethyl-8-(1-D-ribityl)lumazine + phosphate + 2 H2O + H(+). The protein operates within cofactor biosynthesis; riboflavin biosynthesis; riboflavin from 2-hydroxy-3-oxobutyl phosphate and 5-amino-6-(D-ribitylamino)uracil: step 1/2. Its function is as follows. Catalyzes the formation of 6,7-dimethyl-8-ribityllumazine by condensation of 5-amino-6-(D-ribitylamino)uracil with 3,4-dihydroxy-2-butanone 4-phosphate. This is the penultimate step in the biosynthesis of riboflavin. The protein is 6,7-dimethyl-8-ribityllumazine synthase of Citrobacter koseri (strain ATCC BAA-895 / CDC 4225-83 / SGSC4696).